A 651-amino-acid chain; its full sequence is F-box only protein 43 (651 aa).

2 disordered regions span residues 14–42 and 140–171; these read MTAGAKKKADHQDTSVSQDSGYSDSLKGF and LRRIPSHEGSLSNSFADSPRDGSYEPIATSTL. Positions 27–36 are enriched in polar residues; the sequence is TSVSQDSGYS. Phosphoserine; by PLK1 is present on Ser-33. Thr-195 carries the post-translational modification Phosphothreonine; by CaMK2. In terms of domain architecture, F-box spans 424-499; the sequence is SGCFELPEDS…QDKSAHQRRK (76 aa). Residues 579 to 627 form a ZBR-type zinc finger; the sequence is ALKPCPRCQYPAKYQALKKRGTCSRKDCGFDFCSLCLCTFHGSKECGTG. Zn(2+) contacts are provided by Cys-583, Cys-586, Cys-601, Cys-606, Cys-611, Cys-614, His-619, and Cys-624.

In terms of assembly, part of a SCF (SKP1-cullin-F-box) protein ligase complex. Interaction with SKP1 does not occur. Phosphorylated on Thr-195 by CaMK2 in response to calcium during egg activation, which promotes subsequent phosphorylation by PLK1, ubiquitination and protesomal degradation. In terms of processing, ubiquitinated by FBXW1 during egg activation, which promotes proteasomal degradation.

It functions in the pathway protein modification; protein ubiquitination. Functionally, required to prevent anaphase onset in cytostatic factor-arrested oocytes. Inhibits the anaphase-promoting complex/cyclosome (APC/C) ubiquitin ligase and prevents cyclin degradation. Probably recognizes and binds to some phosphorylated proteins and promotes their ubiquitination and degradation. The protein is F-box only protein 43 (fbxo43) of Xenopus laevis (African clawed frog).